Reading from the N-terminus, the 301-residue chain is Probable alpha-L-glutamate ligase (301 aa).

An ATP-grasp domain is found at 104–287 (LQLLSRKGIG…IAGIIIQYLE (184 aa)). ATP contacts are provided by residues lysine 141, 178–179 (EY), aspartate 187, and 211–213 (RSN). Positions 248, 260, and 262 each coordinate Mg(2+). Positions 248, 260, and 262 each coordinate Mn(2+).

It belongs to the RimK family. Requires Mg(2+) as cofactor. It depends on Mn(2+) as a cofactor.

The polypeptide is Probable alpha-L-glutamate ligase (Pseudomonas aeruginosa (strain UCBPP-PA14)).